Consider the following 279-residue polypeptide: Protein CMSS1 (279 aa).

A compositionally biased stretch (acidic residues) spans 1–10 (MADDLGDEWW). The disordered stretch occupies residues 1–89 (MADDLGDEWW…DVLAKSEPKP (89 aa)). Positions 12–22 (NQPTGAGSSPE) are enriched in polar residues. A phosphoserine mark is found at Ser19 and Ser24. At Arg167 the chain carries Omega-N-methylarginine. Position 212 is a phosphothreonine (Thr212).

This sequence belongs to the CMS1 family.

This Homo sapiens (Human) protein is Protein CMSS1 (CMSS1).